A 582-amino-acid chain; its full sequence is Vesicular glutamate transporter 2 (582 aa).

Over 1-71 (MESVKQRILA…CTCFGLPRRY (71 aa)) the chain is Cytoplasmic. A helical membrane pass occupies residues 72-92 (IIAIMSGLGFCISFGIRCNLG). Topologically, residues 93-125 (VAIVDMVNNSTIHRGGKVIKEKAKFNWDPETVG) are vesicular. 2 N-linked (GlcNAc...) asparagine glycosylation sites follow: asparagine 100 and asparagine 101. The chain crosses the membrane as a helical span at residues 126-146 (MIHGSFFWGYIITQIPGGYIA). Over 147-148 (SR) the chain is Cytoplasmic. Residues 149 to 169 (LAANRVFGAAILLTSTLNMLI) form a helical membrane-spanning segment. Over 170-177 (PSAARVHY) the chain is Vesicular. The helical transmembrane segment at 178–198 (GCVIFVRILQGLVEGVTYPAC) threads the bilayer. At 199–216 (HGIWSKWAPPLERSRLAT) the chain is on the cytoplasmic side. The chain crosses the membrane as a helical span at residues 217-237 (TSFCGSYAGAVIAMPLAGILV). The Vesicular portion of the chain corresponds to 238–244 (QYTGWSS). The helical transmembrane segment at 245 to 265 (VFYVYGSFGMVWYMFWLLVSY) threads the bilayer. Topologically, residues 266 to 310 (ESPAKHPTITDEERRYIEESIGESANLLGAMEKFKTPWRKFFTSM) are cytoplasmic. The helical transmembrane segment at 311–331 (PVYAIIVANFCRSWTFYLLLI) threads the bilayer. Residues 332-349 (SQPAYFEEVFGFEISKVG) lie on the Vesicular side of the membrane. A helical membrane pass occupies residues 350–370 (MLSAVPHLVMTIIVPIGGQIA). At 371 to 386 (DFLRSKQILSTTTVRK) the chain is on the cytoplasmic side. A helical membrane pass occupies residues 387-407 (IMNCGGFGMEATLLLVVGYSH). The Vesicular portion of the chain corresponds to 408 to 409 (TR). The helical transmembrane segment at 410–430 (GVAISFLVLAVGFSGFAISGF) threads the bilayer. Residues 431–443 (NVNHLDIAPRYAS) lie on the Cytoplasmic side of the membrane. A helical membrane pass occupies residues 444 to 464 (ILMGISDGVGTLSGMVCPIIV). Topologically, residues 465–477 (GAMTKNKSREEWQ) are vesicular. An N-linked (GlcNAc...) asparagine glycan is attached at asparagine 470. Residues 478 to 498 (YVFLIAALVHYGGVIFYALFA) form a helical membrane-spanning segment. Residues 499 to 582 (SGEKQPWADP…YTYKDRDDYS (84 aa)) are Cytoplasmic-facing.

Belongs to the major facilitator superfamily. Sodium/anion cotransporter family. VGLUT subfamily. Expressed in brain. Expressed in hippocampal neurons (at protein level).

It localises to the cytoplasmic vesicle. The protein resides in the secretory vesicle. The protein localises to the synaptic vesicle membrane. It is found in the synapse. Its subcellular location is the synaptosome. It localises to the cell membrane. The enzyme catalyses L-glutamate(out) = L-glutamate(in). It carries out the reaction K(+)(in) + H(+)(out) = K(+)(out) + H(+)(in). The catalysed reaction is 3 Na(+)(out) + phosphate(out) = 3 Na(+)(in) + phosphate(in). It catalyses the reaction phosphate(in) = phosphate(out). The enzyme catalyses chloride(in) = chloride(out). With respect to regulation, chloride channel activity is allosterically activated by lumenal H(+) and Cl(-) leading to synaptic vesicles acidification. The L-glutamate transport activity is allosterically activated by lumenal H(+) and Cl(-). The allosteric requirement for H(+) efficiently prevents non-vesicular efflux across the plasma membrane. The L-glutamate uniporter activity exhibits a biphasic dependence on chloride concentration. Its function is as follows. Multifunctional transporter that transports L-glutamate as well as multiple ions such as chloride, proton, potassium, sodium and phosphate. At the synaptic vesicle membrane, mainly functions as a uniporter which transports preferentially L-glutamate but also, phosphate from the cytoplasm into synaptic vesicles at presynaptic nerve terminals of excitatory neural cells. The L-glutamate or phosphate uniporter activity is electrogenic and is driven by the proton electrochemical gradient, mainly by the electrical gradient established by the vacuolar H(+)-ATPase across the synaptic vesicle membrane. In addition, functions as a chloride channel that allows a chloride permeation through the synaptic vesicle membrane therefore affects the proton electrochemical gradient and promotes synaptic vesicles acidification. Moreover, functions as a vesicular K(+)/H(+) antiport allowing to maintain the electrical gradient and to decrease chemical gradient and therefore sustain vesicular glutamate uptake. The vesicular H(+)/H(+) antiport activity is electroneutral. At the plasma membrane, following exocytosis, functions as a symporter of Na(+) and phosphate from the extracellular space to the cytoplasm allowing synaptic phosphate homeostasis regulation. The symporter activity is driven by an inside negative membrane potential and is electrogenic. Also involved in the regulation of retinal hyaloid vessel regression during postnatal development. May also play a role in the endocrine glutamatergic system of other tissues such as pineal gland and pancreas. In Mus musculus (Mouse), this protein is Vesicular glutamate transporter 2.